A 298-amino-acid polypeptide reads, in one-letter code: 3'-5' exonuclease crn-4 (298 aa).

Residues 12 to 192 (LILDFETTSD…DDCLNIATIL (181 aa)) form the Exonuclease domain. The Mg(2+) site is built by D15, E17, and D184. Zn(2+) is bound by residues C210, C260, C263, and C270.

In terms of assembly, homodimer (via C-terminus). Interacts with crn-5; interaction promotes the DNase activity of crn-4. Interacts with cps-6, crn-1 and cyn-13. The cofactor is Mg(2+).

Its activity is regulated as follows. Exonuclease activity is inhibited in vitro by pontacyl violet 6R (PV6R), p-chloromercuriphenyl sulfonate (PCMPS), 5,5'-dithiobis(2-nitrobenzoic acid) (DTNB), aurintricarboxylic acid (ATA), 2-morpholin-4-ylethanesulfonate (MES), 4-[(4,6-dichloro-1,3,5-triazin-2-yl)amino]-2-(3-hydroxy-6-oxoxanthen-9-yl)benzoic acid (DR396) and fmoc-d-Cha-OH (FDCO). Interaction with ssRNA is reduced in vitro by PV6R. Its function is as follows. Possesses 3'-&gt;5' exoribonuclease activity in digestion of DNA and RNA. Cleaves nucleic acid substrates with efficiencies in the following order: single-stranded RNA (ssRNA) &gt; double-stranded DNA (dsDNA) &gt; single-stranded DNA (ssDNA). Involved in apoptotic DNA degradation. The chain is 3'-5' exonuclease crn-4 (crn-4) from Caenorhabditis elegans.